The following is a 283-amino-acid chain: Cyclin-C (283 aa).

The 99-residue stretch at 46-144 (NVIQALGEHL…ILECEFYLLE (99 aa)) folds into the Cyclin N-terminal domain. The tract at residues 252–283 (TILSKMPKPKPPPNSEGEQGPNGSQNSSYSQS) is disordered. Residues 272–283 (PNGSQNSSYSQS) show a composition bias toward polar residues.

Belongs to the cyclin family. Cyclin C subfamily. As to quaternary structure, component of the Mediator complex. The cylin/CDK pair formed by CCNC/CDK8 also associates with the large subunit of RNA polymerase II.

The protein resides in the nucleus. Functionally, component of the Mediator complex, a coactivator involved in regulated gene transcription of nearly all RNA polymerase II-dependent genes. Mediator functions as a bridge to convey information from gene-specific regulatory proteins to the basal RNA polymerase II transcription machinery. Mediator is recruited to promoters by direct interactions with regulatory proteins and serves as a scaffold for the assembly of a functional preinitiation complex with RNA polymerase II and the general transcription factors. Binds to and activates cyclin-dependent kinase CDK8 that phosphorylates the CTD (C-terminal domain) of the large subunit of RNA polymerase II (RNAp II), which may inhibit the formation of a transcription initiation complex. The polypeptide is Cyclin-C (CCNC) (Gallus gallus (Chicken)).